Reading from the N-terminus, the 261-residue chain is uncharacterized protein (261 aa).

A signal peptide spans 1–22; it reads MIHSKKLTLGICLVLLIILIGG. The N-palmitoyl cysteine moiety is linked to residue C23. C23 carries S-diacylglycerol cysteine lipidation.

Belongs to the staphylococcal tandem lipoprotein family.

Its subcellular location is the cell membrane. This is an uncharacterized protein from Staphylococcus aureus (strain NCTC 8325 / PS 47).